The following is an 855-amino-acid chain: Inactive rhomboid protein 1 (855 aa).

The Cytoplasmic portion of the chain corresponds to 1 to 411; it reads MSEARRDSTS…HRPFFTYWLT (411 aa). Phosphoserine is present on residues serine 76 and serine 176. A phosphothreonine mark is found at threonine 180 and threonine 183. Serine 390 carries the post-translational modification Phosphoserine. A helical transmembrane segment spans residues 412–432; that stretch reads FVHSLVTILAVCIYGIAPVGF. Residues 433–655 are Lumenal-facing; the sequence is SQHETVDSVL…NPEVPDQFYR (223 aa). Asparagine 583 carries N-linked (GlcNAc...) asparagine glycosylation. The helical transmembrane segment at 656–676 threads the bilayer; it reads LWLSLFLHAGILHCLVSICFQ. Over 677 to 691 the chain is Cytoplasmic; that stretch reads MTVLRDLEKLAGWHR. A helical membrane pass occupies residues 692–712; that stretch reads IAIIYLLSGVTGNLASAIFLP. Residues 713-714 lie on the Lumenal side of the membrane; that stretch reads YR. The chain crosses the membrane as a helical span at residues 715-735; it reads AEVGPAGSQFGILACLFVELF. Over 736–746 the chain is Cytoplasmic; the sequence is QSWQILARPWR. The chain crosses the membrane as a helical span at residues 747 to 767; that stretch reads AFFKLLAVVLFLFTFGLLPWI. The Lumenal portion of the chain corresponds to 768 to 772; that stretch reads DNFAH. The chain crosses the membrane as a helical span at residues 773-793; sequence ISGFISGLFLSFAFLPYISFG. Residues 794–803 are Cytoplasmic-facing; the sequence is KFDLYRKRCQ. A helical membrane pass occupies residues 804–824; the sequence is IIIFQVVFLGLLAGLVVLFYV. Topologically, residues 825-855 are lumenal; that stretch reads YPVRCEWCEFLTCIPFTDKFCEKYELDAQLH.

It belongs to the peptidase S54 family. As to quaternary structure, homodimer, or homooligomer. Interacts with TGFA and HBEGF. Interacts with EGF; may retain EGF in the endoplasmic reticulum and regulates its degradation through the endoplasmic reticulum-associated degradation (ERAD). Interacts (via cytoplasmic N-terminus) with FRMD8/iTAP; this interaction leads to mutual protein stabilization. Interacts with ADAM17/TACE. In terms of processing, N-glycosylated. In terms of tissue distribution, highly expressed in cerebellum, cerebrum, heart, skeletal muscle, placenta, pancreatic islet and testis. Detected at lower levels in colon, kidney, small intestine and lung.

It is found in the endoplasmic reticulum membrane. The protein resides in the golgi apparatus membrane. In terms of biological role, regulates ADAM17 protease, a sheddase of the epidermal growth factor (EGF) receptor ligands and TNF, thereby plays a role in sleep, cell survival, proliferation, migration and inflammation. Does not exhibit any protease activity on its own. The chain is Inactive rhomboid protein 1 (RHBDF1) from Homo sapiens (Human).